The following is a 150-amino-acid chain: Ribosomal RNA large subunit methyltransferase H (150 aa).

Residues Ala100 and Leu118–Phe123 contribute to the S-adenosyl-L-methionine site.

It belongs to the RNA methyltransferase RlmH family. Homodimer.

The protein resides in the cytoplasm. It carries out the reaction pseudouridine(1915) in 23S rRNA + S-adenosyl-L-methionine = N(3)-methylpseudouridine(1915) in 23S rRNA + S-adenosyl-L-homocysteine + H(+). In terms of biological role, specifically methylates the pseudouridine at position 1915 (m3Psi1915) in 23S rRNA. In Helicobacter pylori (strain HPAG1), this protein is Ribosomal RNA large subunit methyltransferase H.